The primary structure comprises 621 residues: Phosphatidylinositol-3,5-bisphosphate 3-phosphatase MTMR6 (621 aa).

In terms of domain architecture, GRAM spans 1–101; the sequence is MEHIRTTKVE…YNSLLQLSKQ (101 aa). The interaction with RAB1B stretch occupies residues 2–141; the sequence is EHIRTTKVEQ…EEYKRMGVPN (140 aa). Phosphotyrosine is present on Tyr-108. Residues 124 to 499 enclose the Myotubularin phosphatase domain; that stretch reads GWQLIDLAEE…FNFKFWRNMY (376 aa). Residues Asn-248, Asn-273, and Ile-274 each coordinate a 1,2-diacyl-sn-glycero-3-phospho-(1D-myo-inositol-3,5-bisphosphate). Residues Asn-248, Asn-273, and Ile-274 each contribute to the a 1,2-diacyl-sn-glycero-3-phospho-(1D-myo-inositol-3-phosphate) site. Cys-336 acts as the Phosphocysteine intermediate in catalysis. Ser-337, Asp-338, Gly-339, Trp-340, Asp-341, Arg-342, Lys-378, and Arg-382 together coordinate a 1,2-diacyl-sn-glycero-3-phospho-(1D-myo-inositol-3,5-bisphosphate). A 1,2-diacyl-sn-glycero-3-phospho-(1D-myo-inositol-3-phosphate)-binding residues include Ser-337, Asp-338, Gly-339, Trp-340, Asp-341, and Arg-342. Arg-382 is a binding site for a 1,2-diacyl-sn-glycero-3-phospho-(1D-myo-inositol-3-phosphate). A phosphoserine mark is found at Ser-556, Ser-561, Ser-589, and Ser-611.

This sequence belongs to the protein-tyrosine phosphatase family. Non-receptor class myotubularin subfamily. In terms of assembly, homodimer. Heterodimer (via C-terminus) with MTMR9 (via C-terminus). Interacts with ALKBH4. Interacts with KCNN4. Interacts (via GRAM domain) with RAB1B (in GDP-bound form); the interaction regulates MTMR6 recruitment to the endoplasmic reticulum-Golgi intermediate compartment. Expressed in CD4+ T-cells.

It localises to the cytoplasm. The protein localises to the endoplasmic reticulum-Golgi intermediate compartment. The protein resides in the endoplasmic reticulum. Its subcellular location is the cell projection. It is found in the ruffle membrane. It localises to the perinuclear region. The catalysed reaction is a 1,2-diacyl-sn-glycero-3-phospho-(1D-myo-inositol-3,5-bisphosphate) + H2O = a 1,2-diacyl-sn-glycero-3-phospho-(1D-myo-inositol-5-phosphate) + phosphate. The enzyme catalyses a 1,2-diacyl-sn-glycero-3-phospho-(1D-myo-inositol-3-phosphate) + H2O = a 1,2-diacyl-sn-glycero-3-phospho-(1D-myo-inositol) + phosphate. It catalyses the reaction 1,2-dioctanoyl-sn-glycero-3-phospho-(1D-myo-inositol-3,5-bisphosphate) + H2O = 1,2-dioctanoyl-sn-glycero-3-phospho-(1D-myo-inositol-5-phosphate) + phosphate. It carries out the reaction 1,2-dioctanoyl-sn-glycero-3-phospho-(1-D-myo-inositol-3-phosphate) + H2O = 1,2-dioctanoyl-sn-glycero-3-phospho-(1D-myo-inositol) + phosphate. With respect to regulation, allosterically activated by phosphatidylserine and/or phosphatidylinositol 4-phosphate (PtdIns(4)P), and phosphatidylinositol 5-phosphate (PtdIns(5)P). Interaction with MTMR9 increases catalytic activity towards phosphatidylinositol 3,5-bisphosphate. Lipid phosphatase that specifically dephosphorylates the D-3 position of phosphatidylinositol 3-phosphate and phosphatidylinositol 3,5-bisphosphate, generating phosphatidylinositol and phosphatidylinositol 5-phosphate. Binds with high affinity to phosphatidylinositol 3,5-bisphosphate (PtdIns(3,5)P2) but also to phosphatidylinositol 3-phosphate (PtdIns(3)P), phosphatidylinositol 4-phosphate (PtdIns(4)P), and phosphatidylinositol 5-phosphate (PtdIns(5)P), phosphatidic acid and phosphatidylserine. Negatively regulates ER-Golgi protein transport. Probably in association with MTMR9, plays a role in the late stages of macropinocytosis by dephosphorylating phosphatidylinositol 3-phosphate in membrane ruffles. Acts as a negative regulator of KCNN4/KCa3.1 channel activity in CD4(+) T-cells possibly by decreasing intracellular levels of phosphatidylinositol 3-phosphate. Negatively regulates proliferation of reactivated CD4(+) T-cells. In complex with MTMR9, negatively regulates DNA damage-induced apoptosis. The formation of the MTMR6-MTMR9 complex stabilizes both MTMR6 and MTMR9 protein levels. The polypeptide is Phosphatidylinositol-3,5-bisphosphate 3-phosphatase MTMR6 (Homo sapiens (Human)).